Here is a 209-residue protein sequence, read N- to C-terminus: CMRF35-like molecule 7 (209 aa).

The signal sequence occupies residues 1-17; that stretch reads MWLSPALLLLSFPGCLS. The 103-residue stretch at 18 to 120 folds into the Ig-like V-type domain; the sequence is IQGPALVRGP…TDRGTRVKVN (103 aa). Residues 18–157 lie on the Extracellular side of the membrane; sequence IQGPALVRGP…SSDLQKRTYY (140 aa). Cys36 and Cys104 are joined by a disulfide. N-linked (GlcNAc...) asparagine glycosylation is present at Asn97. The chain crosses the membrane as a helical span at residues 158 to 178; it reads MLLVFVKVPALLILVGAVLWL. The Cytoplasmic segment spans residues 179-209; sequence KRSTQKVPEEQWRHTLCSDLDSELLAKDISP. The residue at position 196 (Ser196) is a Phosphoserine.

Belongs to the CD300 family. As to quaternary structure, interacts with TYROBP, which enhances cell surface expression and activation properties. May interact with HCST. In terms of processing, N-glycosylated. In terms of tissue distribution, expressed in myeloid cells (at protein level).

It localises to the cell membrane. Its function is as follows. Acts as an activating immune receptor in mast cells through its interaction with ITAM-bearing adapter TYROBP. The chain is CMRF35-like molecule 7 (Cd300lb) from Mus musculus (Mouse).